Consider the following 178-residue polypeptide: Beta-lytic metalloendopeptidase (178 aa).

Cysteines 65 and 111 form a disulfide. 2 residues coordinate Zn(2+): histidine 120 and histidine 122. Cysteine 155 and cysteine 168 are joined by a disulfide.

This sequence belongs to the peptidase M23A family. Zn(2+) is required as a cofactor.

The enzyme catalyses Cleavage of N-acetylmuramoyl-|-Ala, and of the insulin B chain at 23-Gly-|-Phe-24 &gt; 18-Val-|-Cys(SO3H).. In Lysobacter enzymogenes, this protein is Beta-lytic metalloendopeptidase.